The chain runs to 96 residues: MNQEKILKILLAPIVSEKTTMLSAHNQYAFKVRVDCSKREIKAAVEMLFSVNVENVTTSIVKGKKKIFKGRIGSRPNWKKAMVKVSEGQMIDVSRT.

This sequence belongs to the universal ribosomal protein uL23 family. As to quaternary structure, part of the 50S ribosomal subunit. Contacts protein L29, and trigger factor when it is bound to the ribosome.

Functionally, one of the early assembly proteins it binds 23S rRNA. One of the proteins that surrounds the polypeptide exit tunnel on the outside of the ribosome. Forms the main docking site for trigger factor binding to the ribosome. The chain is Large ribosomal subunit protein uL23 from Ruthia magnifica subsp. Calyptogena magnifica.